The following is a 478-amino-acid chain: Transcript termination protein A18 (478 aa).

Positions 98 to 254 (KLSTHRPMYM…NDVVNVLKVS (157 aa)) constitute a Helicase ATP-binding domain. 111–118 (LSCGFGKT) serves as a coordination point for ATP. Residues 204–207 (DESH) carry the DESH box motif. A Helicase C-terminal domain is found at 302–454 (PRNNLIVDTV…IVSVSTDKLG (153 aa)). Residues 456-478 (QQEGKEGTKEEPALTKAFSSQIR) are disordered. Residues 458 to 468 (EGKEGTKEEPA) are compositionally biased toward basic and acidic residues.

This sequence belongs to the helicase family. Poxviruses subfamily. In terms of assembly, interacts with G2. Might be part of a transcription complex composed at least of G2, A18, and H5.

The protein resides in the virion. DNA helicase which seems to act as a postreplicative transcription termination factor. Involved in ATP-dependent release of nascent RNA. Forms a stable complex with single-stranded DNA, and to a lesser extent RNA. This chain is Transcript termination protein A18, found in Oryctolagus cuniculus (Rabbit).